The chain runs to 414 residues: Isocitrate dehydrogenase [NADP] cytoplasmic (414 aa).

Ser-2 carries the N-acetylserine modification. Phosphotyrosine is present on Tyr-42. 75–77 is a binding site for NADP(+); the sequence is TIT. Thr-77 is a substrate binding site. Lys-81 is modified (N6-acetyllysine). Arg-82 lines the NADP(+) pocket. Substrate is bound by residues 94-100 and Arg-109; that span reads SPNGTIR. Position 126 is an N6-succinyllysine (Lys-126). The substrate site is built by Arg-132 and Lys-212. N6-acetyllysine occurs at positions 224, 233, and 243. Asp-252 is a Mn(2+) binding site. Residue Lys-260 coordinates NADP(+). Mn(2+)-binding residues include Asp-275 and Asp-279. 310–315 serves as a coordination point for NADP(+); the sequence is GTVTRH. Lys-321 is modified (N6-acetyllysine). Asn-328 is an NADP(+) binding site. At Ser-389 the chain carries Phosphoserine. Lys-400 carries the post-translational modification N6-succinyllysine.

The protein belongs to the isocitrate and isopropylmalate dehydrogenases family. In terms of assembly, homodimer. Mg(2+) serves as cofactor. Requires Mn(2+) as cofactor. Post-translationally, acetylation at Lys-374 dramatically reduces catalytic activity.

It is found in the cytoplasm. It localises to the cytosol. The enzyme catalyses D-threo-isocitrate + NADP(+) = 2-oxoglutarate + CO2 + NADPH. Functionally, catalyzes the NADP(+)-dependent oxidative decarboxylation of isocitrate (D-threo-isocitrate) to 2-ketoglutarate (2-oxoglutarate), which is required by other enzymes such as the phytanoyl-CoA dioxygenase. Plays a critical role in the generation of NADPH, an important cofactor in many biosynthesis pathways. May act as a corneal epithelial crystallin and may be involved in maintaining corneal epithelial transparency. The protein is Isocitrate dehydrogenase [NADP] cytoplasmic (IDH1) of Pongo abelii (Sumatran orangutan).